We begin with the raw amino-acid sequence, 378 residues long: TelA-like protein SAV1406 (378 aa).

This sequence belongs to the TelA family.

The protein is TelA-like protein SAV1406 of Staphylococcus aureus (strain Mu50 / ATCC 700699).